A 332-amino-acid chain; its full sequence is MRPEPTNAPAALSRRFSVAPMMDWTDRHCRFFLRQLSRHTLLYTEMVTTGALLHGDRQRFLRYDECEHPLALQLGGSVPAELAACARLAEEAGYDEVNLNVGCPSDRVQHNMIGACLMGHPALVADCVKAMLDAVEIAVTVKHRIGINGRDSYAELCDFVGQVREAGCRSFTVHARIAILEGLSPKENREVPPLRYEVAAQLKKDFPDLEIVLNGGIKTLEACREHLQTFDGVMLGREAYHNPYLLAAVDSQLFGSEAPPLSRSEALLRLRPYIERHQAEGGAMHHVTRHILGLAQGFPGSRRFRQLLSVDVHKAADPLRVFDQALELLAGR.

FMN contacts are provided by residues 20–22 (PMM) and Q73. C103 functions as the Proton donor in the catalytic mechanism. Residues K142, H174, 214–216 (NGG), and 236–237 (GR) each bind FMN.

The protein belongs to the Dus family. DusA subfamily. FMN serves as cofactor.

It catalyses the reaction 5,6-dihydrouridine(20) in tRNA + NADP(+) = uridine(20) in tRNA + NADPH + H(+). The catalysed reaction is 5,6-dihydrouridine(20) in tRNA + NAD(+) = uridine(20) in tRNA + NADH + H(+). It carries out the reaction 5,6-dihydrouridine(20a) in tRNA + NADP(+) = uridine(20a) in tRNA + NADPH + H(+). The enzyme catalyses 5,6-dihydrouridine(20a) in tRNA + NAD(+) = uridine(20a) in tRNA + NADH + H(+). Its function is as follows. Catalyzes the synthesis of 5,6-dihydrouridine (D), a modified base found in the D-loop of most tRNAs, via the reduction of the C5-C6 double bond in target uridines. Specifically modifies U20 and U20a in tRNAs. In Pseudomonas aeruginosa (strain ATCC 15692 / DSM 22644 / CIP 104116 / JCM 14847 / LMG 12228 / 1C / PRS 101 / PAO1), this protein is tRNA-dihydrouridine(20/20a) synthase.